The sequence spans 461 residues: mRNA cap guanine-N(7) methyltransferase (461 aa).

The tract at residues 1–117 is disordered; sequence MESSVKASVD…RKLQPQDALE (117 aa). A phosphoserine mark is found at Ser11, Ser15, Ser16, and Ser58. 2 stretches are compositionally biased toward polar residues: residues 14–29 and 49–58; these read ESSPGVNETAAASGQR and EQNSSYVQDS. A compositionally biased stretch (basic and acidic residues) spans 65–93; that stretch reads LDVEIILDEKHSEDDGGASKRSKLERGGG. Residues Ser94 and Ser99 each carry the phosphoserine modification. Positions 107–109 match the Nuclear localization signal motif; that stretch reads KRK. Residues 152 to 460 enclose the mRNA cap 0 methyltransferase domain; it reads SRIFYLRNFN…IYLVFAFEKQ (309 aa). An mRNA-binding site is contributed by 161 to 162; that stretch reads NN. 6 residues coordinate S-adenosyl-L-methionine: Lys165, Gly190, Asp212, Asp246, Gln269, and Tyr274.

The protein belongs to the class I-like SAM-binding methyltransferase superfamily. mRNA cap 0 methyltransferase family. Interacts with importin alpha, leading to stimulate both RNA-binding and methyltransferase activity. Interaction with importin alpha and beta is required for its nuclear localization, importin beta dissociating in response to RanGTP, allowing RNMT-importin alpha to bind RNA substrates. Interacts with elongating form of polymerase II and RNGTT. Interacts with RAMAC, this interaction significantly enhances RNA-binding and cap methyltransferase activity.

Its subcellular location is the nucleus. The catalysed reaction is a 5'-end (5'-triphosphoguanosine)-ribonucleoside in mRNA + S-adenosyl-L-methionine = a 5'-end (N(7)-methyl 5'-triphosphoguanosine)-ribonucleoside in mRNA + S-adenosyl-L-homocysteine. With respect to regulation, methyltransferase activity is activated by RAMAC. Its function is as follows. Catalytic subunit of the mRNA-capping methyltransferase RNMT:RAMAC complex that methylates the N7 position of the added guanosine to the 5'-cap structure of mRNAs. Binds RNA containing 5'-terminal GpppC. The protein is mRNA cap guanine-N(7) methyltransferase (Rnmt) of Rattus norvegicus (Rat).